We begin with the raw amino-acid sequence, 268 residues long: Fc receptor-like protein 6 (268 aa).

The first 16 residues, 1–16, serve as a signal peptide directing secretion; that stretch reads MLLWMVLLLCESMAEA. Residues 17 to 215 lie on the Extracellular side of the membrane; that stretch reads QELFPNPELT…TAWIKSNMLP (199 aa). An Ig-like C2-type domain is found at 114-194; the sequence is PVLTLQHEAT…AKNNISREIS (81 aa). A disulfide bridge connects residues cysteine 135 and cysteine 183. Asparagine 180 and asparagine 188 each carry an N-linked (GlcNAc...) asparagine glycan. Residues 216–236 form a helical membrane-spanning segment; the sequence is IWLPASLLGGMVIAAVVLMYF. Topologically, residues 237–268 are cytoplasmic; sequence FKPCKKHARPETPTLKEPDSFLYVSVDNQRYK.

In terms of assembly, interacts with class II MHC.

It localises to the cell membrane. Its function is as follows. Acts as a MHC class II receptor. When stimulated on its own, does not play a role in cytokine production or the release of cytotoxic granules by NK cells and cytotoxic CD8(+) T cells. Does not act as an Fc receptor. The polypeptide is Fc receptor-like protein 6 (Fcrl6) (Mus musculus (Mouse)).